A 494-amino-acid polypeptide reads, in one-letter code: Cysteine--tRNA ligase (494 aa).

A Zn(2+)-binding site is contributed by C29. Positions 31–41 match the 'HIGH' region motif; sequence LTVSDDAHLGH. A disordered region spans residues 187–220; that stretch reads KAGGVSPDDANTHRDDELPPLDGERGQTWASPWG. A compositionally biased stretch (basic and acidic residues) spans 196–211; it reads ANTHRDDELPPLDGER. Residues C230, H255, and E259 each coordinate Zn(2+). The 'KMSKS' region motif lies at 287–291; the sequence is KMSSS.

It belongs to the class-I aminoacyl-tRNA synthetase family. Zn(2+) serves as cofactor.

It is found in the cytoplasm. The enzyme catalyses tRNA(Cys) + L-cysteine + ATP = L-cysteinyl-tRNA(Cys) + AMP + diphosphate. The chain is Cysteine--tRNA ligase from Halobacterium salinarum (strain ATCC 700922 / JCM 11081 / NRC-1) (Halobacterium halobium).